The primary structure comprises 268 residues: Ribonuclease P protein subunit p30 (268 aa).

Alanine 2 bears the N-acetylalanine mark. The residue at position 251 (serine 251) is a Phosphoserine.

This sequence belongs to the eukaryotic/archaeal RNase P protein component 3 family. As to quaternary structure, component of nuclear RNase P and RNase MRP ribonucleoproteins. RNase P consists of a catalytic RNA moiety and about 10 protein subunits; POP1, POP4, POP5, POP7, RPP14, RPP21, RPP25, RPP30, RPP38 and RPP40. Within the RNase P complex, POP1, POP7 and RPP25 form the 'finger' subcomplex, POP5, RPP14, RPP40 and homodimeric RPP30 form the 'palm' subcomplex, and RPP21, POP4 and RPP38 form the 'wrist' subcomplex. All subunits of the RNase P complex interact with the catalytic RNA. Several subunits of RNase P are also part of the RNase MRP complex. RNase MRP consists of a catalytic RNA moiety and about 8 protein subunits; POP1, POP7, RPP25, RPP30, RPP38, RPP40 and possibly also POP4 and POP5.

The protein localises to the nucleus. It localises to the nucleolus. Its function is as follows. Component of ribonuclease P, a ribonucleoprotein complex that generates mature tRNA molecules by cleaving their 5'-ends. Also a component of the MRP ribonuclease complex, which cleaves pre-rRNA sequences. The sequence is that of Ribonuclease P protein subunit p30 (Rpp30) from Mus musculus (Mouse).